Consider the following 188-residue polypeptide: dCTP deaminase (188 aa).

DCTP is bound by residues Lys-111–Arg-116, Thr-135–Glu-137, Gln-156, Tyr-170, and Gln-180. The active-site Proton donor/acceptor is Glu-137.

Belongs to the dCTP deaminase family. In terms of assembly, homotrimer.

The enzyme catalyses dCTP + H2O + H(+) = dUTP + NH4(+). Its pathway is pyrimidine metabolism; dUMP biosynthesis; dUMP from dCTP (dUTP route): step 1/2. Catalyzes the deamination of dCTP to dUTP. The protein is dCTP deaminase of Janthinobacterium sp. (strain Marseille) (Minibacterium massiliensis).